A 330-amino-acid chain; its full sequence is Lipoyl synthase (330 aa).

The segment at 1–31 is disordered; the sequence is MSDAPIATSSEVTQSPADYDPTKKQKSAEKT. The segment covering 7 to 16 has biased composition (polar residues); the sequence is ATSSEVTQSP. The span at 20-31 shows a compositional bias: basic and acidic residues; the sequence is DPTKKQKSAEKT. 7 residues coordinate [4Fe-4S] cluster: C77, C82, C88, C103, C107, C110, and S317. A Radical SAM core domain is found at 88–306; that stretch reads CFGKGTATFM…EEEAYKMGFT (219 aa).

Belongs to the radical SAM superfamily. Lipoyl synthase family. It depends on [4Fe-4S] cluster as a cofactor.

The protein resides in the cytoplasm. It catalyses the reaction [[Fe-S] cluster scaffold protein carrying a second [4Fe-4S](2+) cluster] + N(6)-octanoyl-L-lysyl-[protein] + 2 oxidized [2Fe-2S]-[ferredoxin] + 2 S-adenosyl-L-methionine + 4 H(+) = [[Fe-S] cluster scaffold protein] + N(6)-[(R)-dihydrolipoyl]-L-lysyl-[protein] + 4 Fe(3+) + 2 hydrogen sulfide + 2 5'-deoxyadenosine + 2 L-methionine + 2 reduced [2Fe-2S]-[ferredoxin]. Its pathway is protein modification; protein lipoylation via endogenous pathway; protein N(6)-(lipoyl)lysine from octanoyl-[acyl-carrier-protein]: step 2/2. In terms of biological role, catalyzes the radical-mediated insertion of two sulfur atoms into the C-6 and C-8 positions of the octanoyl moiety bound to the lipoyl domains of lipoate-dependent enzymes, thereby converting the octanoylated domains into lipoylated derivatives. This chain is Lipoyl synthase, found in Cupriavidus metallidurans (strain ATCC 43123 / DSM 2839 / NBRC 102507 / CH34) (Ralstonia metallidurans).